Consider the following 407-residue polypeptide: Phosphopentomutase (407 aa).

Mn(2+)-binding residues include aspartate 10, aspartate 306, histidine 311, aspartate 347, histidine 348, and histidine 359.

Belongs to the phosphopentomutase family. The cofactor is Mn(2+).

The protein localises to the cytoplasm. The catalysed reaction is 2-deoxy-alpha-D-ribose 1-phosphate = 2-deoxy-D-ribose 5-phosphate. The enzyme catalyses alpha-D-ribose 1-phosphate = D-ribose 5-phosphate. The protein operates within carbohydrate degradation; 2-deoxy-D-ribose 1-phosphate degradation; D-glyceraldehyde 3-phosphate and acetaldehyde from 2-deoxy-alpha-D-ribose 1-phosphate: step 1/2. In terms of biological role, isomerase that catalyzes the conversion of deoxy-ribose 1-phosphate (dRib-1-P) and ribose 1-phosphate (Rib-1-P) to deoxy-ribose 5-phosphate (dRib-5-P) and ribose 5-phosphate (Rib-5-P), respectively. This Shigella boydii serotype 18 (strain CDC 3083-94 / BS512) protein is Phosphopentomutase.